We begin with the raw amino-acid sequence, 409 residues long: Glycoprotein 55 (409 aa).

An N-terminal signal peptide occupies residues 1-32 (MEGPASSKPLKDKTNPWGPLIILGILIRAGVS). The Virion surface segment spans residues 33–384 (VQLDSPHQVS…SSNRSPWFTT (352 aa)). 2 N-linked (GlcNAc...) asparagine; by host glycosylation sites follow: Asn-43 and Asn-58. A disordered region spans residues 232-280 (PIGSNPVTTDQLPLSRPVQTMPPRPLQPPPPGAASIVPETAPPPQQPGA). Over residues 251–263 (TMPPRPLQPPPPG) the composition is skewed to pro residues. 2 N-linked (GlcNAc...) asparagine; by host glycosylation sites follow: Asn-296 and Asn-328. A helical membrane pass occupies residues 385-405 (LISAIMGSLIILLLLLILLIW). The Intravirion segment spans residues 406–409 (TLYS).

As to quaternary structure, homooligomer. Forms heterooligomers with mouse EPOR, probably via their respective transmembrane domains. Forms covalent heterodimers with mouse MST1R isoform sf-Stk, probably via disulfide bonds.

The protein resides in the host endoplasmic reticulum membrane. It localises to the host cell membrane. The protein localises to the virion membrane. Functionally, this envelope-like membrane glycoprotein is responsible for ligand-independent activation of the erythropoietin receptor EPOR leading to the abnormally rapid proliferation of erythroid precursor cells. In the first stage of Friend disease, constitutive activation of EPOR by gp55 causes uncontrolled, polyclonal proliferation of infected erythroblasts, leading to polycythemia (massive increase in the number of mature red cells). Host susceptibility to SSFV-induced erythroblastosis depends on the expression of the truncated isoform of MST1R receptor tyrosine kinase (MST1R isoform sf-Stk). Interaction with SSFV gp 55 results in constitutive tyrosine phosphorylation and activation of MST1R isoform sf-Stk. The chain is Glycoprotein 55 (env) from Mus musculus (Mouse).